A 215-amino-acid polypeptide reads, in one-letter code: Large ribosomal subunit protein bL25 (215 aa).

Residues 160–215 form a disordered region; that stretch reads GDLPLPEGSELVTEPEETVMSVVAPETEEEPDTEEDEEGEEDVEEESEEEEEESEE. The segment covering 185–215 has biased composition (acidic residues); the sequence is ETEEEPDTEEDEEGEEDVEEESEEEEEESEE.

Belongs to the bacterial ribosomal protein bL25 family. CTC subfamily. In terms of assembly, part of the 50S ribosomal subunit; part of the 5S rRNA/L5/L18/L25 subcomplex. Contacts the 5S rRNA. Binds to the 5S rRNA independently of L5 and L18.

This is one of the proteins that binds to the 5S RNA in the ribosome where it forms part of the central protuberance. This Natranaerobius thermophilus (strain ATCC BAA-1301 / DSM 18059 / JW/NM-WN-LF) protein is Large ribosomal subunit protein bL25.